A 116-amino-acid polypeptide reads, in one-letter code: Large ribosomal subunit protein uL18 (116 aa).

The protein belongs to the universal ribosomal protein uL18 family. Part of the 50S ribosomal subunit; part of the 5S rRNA/L5/L18/L25 subcomplex. Contacts the 5S and 23S rRNAs.

Functionally, this is one of the proteins that bind and probably mediate the attachment of the 5S RNA into the large ribosomal subunit, where it forms part of the central protuberance. This chain is Large ribosomal subunit protein uL18, found in Shewanella loihica (strain ATCC BAA-1088 / PV-4).